Here is a 129-residue protein sequence, read N- to C-terminus: Protein LLP homolog (129 aa).

The segment covering 1–21 has biased composition (basic residues); the sequence is MAKSLRSKWKRKMRAEKRKKN. The interval 1 to 27 is disordered; that stretch reads MAKSLRSKWKRKMRAEKRKKNAPKEAS. Glycyl lysine isopeptide (Lys-Gly) (interchain with G-Cter in SUMO2) cross-links involve residues Lys67 and Lys74. Residues 100–122 show a composition bias toward basic residues; the sequence is RQRKRLKAKREKRKGKSKAKAVK. The interval 100–129 is disordered; sequence RQRKRLKAKREKRKGKSKAKAVKVAKGLAW.

This sequence belongs to the learning-associated protein family. As to quaternary structure, interacts with CTCF, MYO1C and with the transcriptional machinery, including RNA polymerase II and TBP.

Its subcellular location is the nucleus. The protein localises to the nucleolus. It localises to the chromosome. Functionally, in hippocampal neurons, regulates dendritic and spine growth and synaptic transmission. In Homo sapiens (Human), this protein is Protein LLP homolog (LLPH).